A 505-amino-acid polypeptide reads, in one-letter code: Histidine ammonia-lyase (505 aa).

A cross-link (5-imidazolinone (Ala-Gly)) is located at residues 144–146 (ASG). A 2,3-didehydroalanine (Ser) modification is found at S145.

The protein belongs to the PAL/histidase family. Post-translationally, contains an active site 4-methylidene-imidazol-5-one (MIO), which is formed autocatalytically by cyclization and dehydration of residues Ala-Ser-Gly.

The protein localises to the cytoplasm. The enzyme catalyses L-histidine = trans-urocanate + NH4(+). Its pathway is amino-acid degradation; L-histidine degradation into L-glutamate; N-formimidoyl-L-glutamate from L-histidine: step 1/3. This chain is Histidine ammonia-lyase, found in Legionella pneumophila (strain Corby).